We begin with the raw amino-acid sequence, 55 residues long: Large ribosomal subunit protein bL33 (55 aa).

It belongs to the bacterial ribosomal protein bL33 family.

The sequence is that of Large ribosomal subunit protein bL33 from Sphingopyxis alaskensis (strain DSM 13593 / LMG 18877 / RB2256) (Sphingomonas alaskensis).